The following is a 73-amino-acid chain: Ferredoxin-thioredoxin reductase, variable chain (73 aa).

Residues 43-46 (NGKP) are interaction with ferredoxin.

Belongs to the ferredoxin thioredoxin reductase alpha subunit family. As to quaternary structure, heterodimer of subunit A (variable subunit) and subunit B (catalytic subunit). Heterodimeric FTR forms a complex with ferredoxin and thioredoxin.

Its function is as follows. Variable subunit of the ferredoxin-thioredoxin reductase (FTR), which catalyzes the two-electron reduction of thioredoxins by the electrons provided by reduced ferredoxin. This is Ferredoxin-thioredoxin reductase, variable chain (ftrV) from Synechococcus sp. (strain ATCC 27144 / PCC 6301 / SAUG 1402/1) (Anacystis nidulans).